The following is a 165-amino-acid chain: SsrA-binding protein (165 aa).

Residues 135–158 (QAHDKRQDMARRDAQREVTRELGR) are compositionally biased toward basic and acidic residues. The disordered stretch occupies residues 135–165 (QAHDKRQDMARRDAQREVTRELGRRVKGMTS).

Belongs to the SmpB family.

It localises to the cytoplasm. In terms of biological role, required for rescue of stalled ribosomes mediated by trans-translation. Binds to transfer-messenger RNA (tmRNA), required for stable association of tmRNA with ribosomes. tmRNA and SmpB together mimic tRNA shape, replacing the anticodon stem-loop with SmpB. tmRNA is encoded by the ssrA gene; the 2 termini fold to resemble tRNA(Ala) and it encodes a 'tag peptide', a short internal open reading frame. During trans-translation Ala-aminoacylated tmRNA acts like a tRNA, entering the A-site of stalled ribosomes, displacing the stalled mRNA. The ribosome then switches to translate the ORF on the tmRNA; the nascent peptide is terminated with the 'tag peptide' encoded by the tmRNA and targeted for degradation. The ribosome is freed to recommence translation, which seems to be the essential function of trans-translation. The chain is SsrA-binding protein from Mycolicibacterium vanbaalenii (strain DSM 7251 / JCM 13017 / BCRC 16820 / KCTC 9966 / NRRL B-24157 / PYR-1) (Mycobacterium vanbaalenii).